Here is a 183-residue protein sequence, read N- to C-terminus: Glutathione-regulated potassium-efflux system ancillary protein KefG (183 aa).

This sequence belongs to the NAD(P)H dehydrogenase (quinone) family. KefG subfamily. As to quaternary structure, interacts with KefB.

Its subcellular location is the cell inner membrane. It carries out the reaction a quinone + NADH + H(+) = a quinol + NAD(+). The catalysed reaction is a quinone + NADPH + H(+) = a quinol + NADP(+). In terms of biological role, regulatory subunit of a potassium efflux system that confers protection against electrophiles. Required for full activity of KefB. The sequence is that of Glutathione-regulated potassium-efflux system ancillary protein KefG from Escherichia coli O6:K15:H31 (strain 536 / UPEC).